We begin with the raw amino-acid sequence, 113 residues long: Large ribosomal subunit protein bL19 (113 aa).

Belongs to the bacterial ribosomal protein bL19 family.

Its function is as follows. This protein is located at the 30S-50S ribosomal subunit interface and may play a role in the structure and function of the aminoacyl-tRNA binding site. This is Large ribosomal subunit protein bL19 from Moorella thermoacetica (strain ATCC 39073 / JCM 9320).